The following is a 433-amino-acid chain: FAD-dependent monooxygenase notI (433 aa).

FAD is bound by residues glutamate 45 and arginine 117. Residue arginine 195 is part of the active site. Positions 314 and 327 each coordinate FAD.

Belongs to the paxM FAD-dependent monooxygenase family. The cofactor is FAD.

Its pathway is alkaloid biosynthesis. In terms of biological role, FAD-dependent monooxygenase; part of the gene cluster that mediates the biosynthesis of notoamide, a fungal indole alkaloid that belongs to a family of natural products containing a characteristic bicyclo[2.2.2]diazaoctane core. The first step of notoamide biosynthesis involves coupling of L-proline and L-tryptophan by the bimodular NRPS notE, to produce cyclo-L-tryptophan-L-proline called brevianamide F. The reverse prenyltransferase notF then acts as a deoxybrevianamide E synthase and converts brevianamide F to deoxybrevianamide E via reverse prenylation at C-2 of the indole ring leading to the bicyclo[2.2.2]diazaoctane core. Deoxybrevianamide E is further hydroxylated at C-6 of the indole ring, likely catalyzed by the cytochrome P450 monooxygenase notG, to yield 6-hydroxy-deoxybrevianamide E. 6-hydroxy-deoxybrevianamide E is a specific substrate of the prenyltransferase notC for normal prenylation at C-7 to produce 6-hydroxy-7-prenyl-deoxybrevianamide, also called notoamide S. As the proposed pivotal branching point in notoamide biosynthesis, notoamide S can be diverted to notoamide E through an oxidative pyran ring closure putatively catalyzed by either notH cytochrome P450 monooxygenase or the notD FAD-linked oxidoreductase. This step would be followed by an indole 2,3-epoxidation-initiated pinacol-like rearrangement catalyzed by the notB FAD-dependent monooxygenase leading to the formation of notoamide C and notoamide D. On the other hand notoamide S is converted to notoamide T by notH (or notD), a bifunctional oxidase that also functions as the intramolecular Diels-Alderase responsible for generation of (+)-notoamide T. To generate antipodal (-)-notoaminide T, notH' (or notD') in Aspergillus versicolor is expected to catalyze a Diels-Alder reaction leading to the opposite stereochemistry. The remaining oxidoreductase notD (or notH) likely catalyzes the oxidative pyran ring formation to yield (+)-stephacidin A. The FAD-dependent monooxygenase notI is highly similar to notB and is predicted to catalyze a similar conversion from (+)-stephacidin A to (-)-notoamide B via the 2,3-epoxidation of (+)-stephacidin A followed by a pinacol-type rearrangement. Finally, it remains unclear which enzyme could be responsible for the final hydroxylation steps leading to notoamide A and sclerotiamide. The polypeptide is FAD-dependent monooxygenase notI (Aspergillus sp. (strain MF297-2)).